The primary structure comprises 385 residues: NADH-quinone oxidoreductase subunit D 2 (385 aa).

It belongs to the complex I 49 kDa subunit family. In terms of assembly, NDH-1 is composed of 14 different subunits. Subunits NuoB, C, D, E, F, and G constitute the peripheral sector of the complex.

Its subcellular location is the cell membrane. The enzyme catalyses a quinone + NADH + 5 H(+)(in) = a quinol + NAD(+) + 4 H(+)(out). Its function is as follows. NDH-1 shuttles electrons from NADH, via FMN and iron-sulfur (Fe-S) centers, to quinones in the respiratory chain. The immediate electron acceptor for the enzyme in this species is believed to be a menaquinone. Couples the redox reaction to proton translocation (for every two electrons transferred, four hydrogen ions are translocated across the cytoplasmic membrane), and thus conserves the redox energy in a proton gradient. This Salinispora arenicola (strain CNS-205) protein is NADH-quinone oxidoreductase subunit D 2.